A 364-amino-acid chain; its full sequence is Probable dual-specificity RNA methyltransferase RlmN (364 aa).

The active-site Proton acceptor is the E107. Residues 113-346 (HEYGNSVCVT…ATIRREQGAD (234 aa)) form the Radical SAM core domain. The cysteines at positions 120 and 351 are disulfide-linked. Residues C127, C131, and C134 each coordinate [4Fe-4S] cluster. Residues 177-178 (GE), S209, 232-234 (SLH), and N308 each bind S-adenosyl-L-methionine. C351 acts as the S-methylcysteine intermediate in catalysis.

The protein belongs to the radical SAM superfamily. RlmN family. [4Fe-4S] cluster serves as cofactor.

Its subcellular location is the cytoplasm. The enzyme catalyses adenosine(2503) in 23S rRNA + 2 reduced [2Fe-2S]-[ferredoxin] + 2 S-adenosyl-L-methionine = 2-methyladenosine(2503) in 23S rRNA + 5'-deoxyadenosine + L-methionine + 2 oxidized [2Fe-2S]-[ferredoxin] + S-adenosyl-L-homocysteine. It catalyses the reaction adenosine(37) in tRNA + 2 reduced [2Fe-2S]-[ferredoxin] + 2 S-adenosyl-L-methionine = 2-methyladenosine(37) in tRNA + 5'-deoxyadenosine + L-methionine + 2 oxidized [2Fe-2S]-[ferredoxin] + S-adenosyl-L-homocysteine. In terms of biological role, specifically methylates position 2 of adenine 2503 in 23S rRNA and position 2 of adenine 37 in tRNAs. Confers resistance to some classes of antibiotics. The chain is Probable dual-specificity RNA methyltransferase RlmN from Staphylococcus saprophyticus subsp. saprophyticus (strain ATCC 15305 / DSM 20229 / NCIMB 8711 / NCTC 7292 / S-41).